Here is a 177-residue protein sequence, read N- to C-terminus: Dual-action ribosomal maturation protein DarP (177 aa).

The span at 1–12 (MKIVGDSEHFKQ) shows a compositional bias: basic and acidic residues. Residues 1 to 26 (MKIVGDSEHFKQPYDSNDEYVSKTED) form a disordered region.

The protein belongs to the DarP family.

The protein resides in the cytoplasm. Functionally, member of a network of 50S ribosomal subunit biogenesis factors which assembles along the 30S-50S interface, preventing incorrect 23S rRNA structures from forming. Promotes peptidyl transferase center (PTC) maturation. This is Dual-action ribosomal maturation protein DarP from Shewanella oneidensis (strain ATCC 700550 / JCM 31522 / CIP 106686 / LMG 19005 / NCIMB 14063 / MR-1).